The chain runs to 498 residues: UDP-N-acetylmuramate--L-alanine ligase (498 aa).

ATP is bound at residue 122–128 (GTHGKTS).

This sequence belongs to the MurCDEF family.

The protein resides in the cytoplasm. It catalyses the reaction UDP-N-acetyl-alpha-D-muramate + L-alanine + ATP = UDP-N-acetyl-alpha-D-muramoyl-L-alanine + ADP + phosphate + H(+). The protein operates within cell wall biogenesis; peptidoglycan biosynthesis. Its function is as follows. Cell wall formation. The protein is UDP-N-acetylmuramate--L-alanine ligase of Corynebacterium jeikeium (strain K411).